The primary structure comprises 291 residues: Beta-lactamase CTX-M-15 (291 aa).

An N-terminal signal peptide occupies residues 1–28 (MVKKSLRQFTLMATATVTLLLGSVPLYA). Catalysis depends on Ser73, which acts as the Nucleophile; acyl-ester intermediate. Lys76, Ser133, Glu169, and Ser240 together coordinate a beta-lactam.

It belongs to the class-A beta-lactamase family. As to quaternary structure, monomer.

The protein resides in the secreted. The catalysed reaction is a beta-lactam + H2O = a substituted beta-amino acid. Inhibited by the beta-lactamase-blocking agents clavulanic acid and avibactam, via a covalent binding to Ser-73. In terms of biological role, extended-spectrum beta-lactamase (ESBL) which confers resistance to penicillins, as well as first, second, third and fourth-generation cephalosporins. Has cefotaxime- and ceftazidime-hydrolyzing activity. Inactive against the carbapenem antibiotics, imipenem, meropenem and ertapenem. The polypeptide is Beta-lactamase CTX-M-15 (Escherichia coli O25b:H4).